A 378-amino-acid chain; its full sequence is Ferredoxin--NADP reductase, root isozyme, chloroplastic (378 aa).

The span at 1 to 17 (MATAVASQVAVSAPAGS) shows a compositional bias: low complexity. A disordered region spans residues 1–27 (MATAVASQVAVSAPAGSDRGLRSSGIQ). A chloroplast-targeting transit peptide spans 1–62 (MATAVASQVA…PRHANKVLCM (62 aa)). In terms of domain architecture, FAD-binding FR-type spans 93–221 (KEPYTATIVS…TGPSGKIMLL (129 aa)). FAD contacts are provided by residues 153–156 (RLYS), 174–176 (CVR), tyrosine 180, 195–197 (VCS), and threonine 237. 2 residues coordinate NADP(+): serine 156 and arginine 176. NADP(+) contacts are provided by residues threonine 237, 269-270 (VA), 299-300 (SR), lysine 309, 337-338 (GL), and glutamate 376.

Belongs to the ferredoxin--NADP reductase type 1 family. The cofactor is FAD.

The protein localises to the plastid. Its subcellular location is the chloroplast. It carries out the reaction 2 reduced [2Fe-2S]-[ferredoxin] + NADP(+) + H(+) = 2 oxidized [2Fe-2S]-[ferredoxin] + NADPH. The protein operates within energy metabolism; photosynthesis. In terms of biological role, may play a key role in regulating the relative amounts of cyclic and non-cyclic electron flow to meet the demands of the plant for ATP and reducing power. Is involved in nitrate assimilation. The sequence is that of Ferredoxin--NADP reductase, root isozyme, chloroplastic from Oryza sativa subsp. japonica (Rice).